The following is an 86-amino-acid chain: Neurotoxin homolog NL1 (86 aa).

An N-terminal signal peptide occupies residues Met-1–Thr-21. Disulfide bonds link Cys-24–Cys-45, Cys-38–Cys-62, Cys-66–Cys-78, and Cys-79–Cys-84.

Belongs to the three-finger toxin family. Short-chain subfamily. Orphan group VIII (haditoxin) sub-subfamily. Homodimer; non-covalently linked. As to expression, expressed by the venom gland.

It localises to the secreted. Its function is as follows. Antagonist of muscle and neuronal nicotinic acetylcholine receptors (nAChR) with highest affinity for neuronal alpha-7/CHRNA7 nAChRs. In Naja atra (Chinese cobra), this protein is Neurotoxin homolog NL1.